Consider the following 183-residue polypeptide: Probable chorismate pyruvate-lyase 2 (183 aa).

Substrate-binding residues include Arg-76, Leu-114, and Glu-166.

It belongs to the UbiC family.

Its subcellular location is the cytoplasm. The catalysed reaction is chorismate = 4-hydroxybenzoate + pyruvate. It functions in the pathway cofactor biosynthesis; ubiquinone biosynthesis. Removes the pyruvyl group from chorismate, with concomitant aromatization of the ring, to provide 4-hydroxybenzoate (4HB) for the ubiquinone pathway. The protein is Probable chorismate pyruvate-lyase 2 of Pseudomonas fluorescens (strain Pf0-1).